The primary structure comprises 154 residues: Transcriptional repressor NrdR (154 aa).

The segment at 3 to 34 (CPFCGNENTRVIDTRAAEDGFAIKRRRECENC) is a zinc-finger region. An ATP-cone domain is found at 49–139 (LIVVKKDGSK…VYRQFKDVNS (91 aa)).

Belongs to the NrdR family. Zn(2+) is required as a cofactor.

In terms of biological role, negatively regulates transcription of bacterial ribonucleotide reductase nrd genes and operons by binding to NrdR-boxes. The chain is Transcriptional repressor NrdR from Carboxydothermus hydrogenoformans (strain ATCC BAA-161 / DSM 6008 / Z-2901).